The sequence spans 584 residues: Aspartate--tRNA(Asp/Asn) ligase (584 aa).

An L-aspartate-binding site is contributed by E174. The interval 198–201 (QLFK) is aspartate. R220 provides a ligand contact to L-aspartate. ATP contacts are provided by residues 220-222 (RDE) and Q229. H447 contacts L-aspartate. E480 is an ATP binding site. Residue R487 coordinates L-aspartate. 532–535 (GFDR) is an ATP binding site.

The protein belongs to the class-II aminoacyl-tRNA synthetase family. Type 1 subfamily. In terms of assembly, homodimer.

The protein localises to the cytoplasm. It catalyses the reaction tRNA(Asx) + L-aspartate + ATP = L-aspartyl-tRNA(Asx) + AMP + diphosphate. Aspartyl-tRNA synthetase with relaxed tRNA specificity since it is able to aspartylate not only its cognate tRNA(Asp) but also tRNA(Asn). Reaction proceeds in two steps: L-aspartate is first activated by ATP to form Asp-AMP and then transferred to the acceptor end of tRNA(Asp/Asn). This is Aspartate--tRNA(Asp/Asn) ligase from Endomicrobium trichonymphae.